The chain runs to 307 residues: MSSTPIKHYLQFSDLTPDEYEYLLDRARILKAKFKNYETWHPLHDRTLAMIFEKNSTRTRLSFEAGIHQLGGHAVFLNTRDSQLGRGEPIEDAAQVISRMVDIIMIRTFGQDIIERFAAHSRVPVINGLTNEYHPCQVLADVFTYIEQRGSIRGKTVAWIGDANNMAYTWIQAAERLGFTFHFSAPPGYQLDPALVPASAAGQLKVFEDPLAACKGASLVTTDVWTSMGFEAENEARKRAFQNWMVTTAMMDRAEPDALFMHCLPAHRGEEVEAAVIDGPKSVVWDEAENRLHVQKALMEYLLCGRY.

Residues 56–59 (STRT), Gln83, Arg107, and 134–137 (HPCQ) contribute to the carbamoyl phosphate site. Residues Asn165, Asp223, and 227 to 228 (SM) each bind L-ornithine. Residues 263–264 (CL) and Arg291 contribute to the carbamoyl phosphate site.

The protein belongs to the aspartate/ornithine carbamoyltransferase superfamily. OTCase family.

It localises to the cytoplasm. The catalysed reaction is carbamoyl phosphate + L-ornithine = L-citrulline + phosphate + H(+). It participates in amino-acid biosynthesis; L-arginine biosynthesis; L-arginine from L-ornithine and carbamoyl phosphate: step 1/3. Functionally, reversibly catalyzes the transfer of the carbamoyl group from carbamoyl phosphate (CP) to the N(epsilon) atom of ornithine (ORN) to produce L-citrulline. The chain is Ornithine carbamoyltransferase from Cupriavidus pinatubonensis (strain JMP 134 / LMG 1197) (Cupriavidus necator (strain JMP 134)).